A 246-amino-acid polypeptide reads, in one-letter code: Pyridoxine 5'-phosphate synthase (246 aa).

N12 serves as a coordination point for 3-amino-2-oxopropyl phosphate. 14-15 serves as a coordination point for 1-deoxy-D-xylulose 5-phosphate; it reads DH. R23 is a binding site for 3-amino-2-oxopropyl phosphate. H48 serves as the catalytic Proton acceptor. The 1-deoxy-D-xylulose 5-phosphate site is built by R50 and H55. E75 functions as the Proton acceptor in the catalytic mechanism. 1-deoxy-D-xylulose 5-phosphate is bound at residue T105. Residue H196 is the Proton donor of the active site. Residues G197 and 218–219 contribute to the 3-amino-2-oxopropyl phosphate site; that span reads GH.

This sequence belongs to the PNP synthase family. In terms of assembly, homooctamer; tetramer of dimers.

It localises to the cytoplasm. The catalysed reaction is 3-amino-2-oxopropyl phosphate + 1-deoxy-D-xylulose 5-phosphate = pyridoxine 5'-phosphate + phosphate + 2 H2O + H(+). Its pathway is cofactor biosynthesis; pyridoxine 5'-phosphate biosynthesis; pyridoxine 5'-phosphate from D-erythrose 4-phosphate: step 5/5. Catalyzes the complicated ring closure reaction between the two acyclic compounds 1-deoxy-D-xylulose-5-phosphate (DXP) and 3-amino-2-oxopropyl phosphate (1-amino-acetone-3-phosphate or AAP) to form pyridoxine 5'-phosphate (PNP) and inorganic phosphate. The polypeptide is Pyridoxine 5'-phosphate synthase (Pseudomonas syringae pv. syringae (strain B728a)).